Here is a 222-residue protein sequence, read N- to C-terminus: Probable elongation factor 1-beta (222 aa).

The tract at residues 90–111 (KPAADDDDDVDLFGSDDEEDEE) is disordered. Over residues 94-111 (DDDDDVDLFGSDDEEDEE) the composition is skewed to acidic residues. Position 104 is a phosphoserine (Ser-104).

It belongs to the EF-1-beta/EF-1-delta family. In terms of assembly, EF-1 is composed of 4 subunits: alpha, beta, beta' and gamma. Phosphorylation affects the GDP/GTP exchange rate.

EF-1-beta and EF-1-delta stimulate the exchange of GDP bound to EF-1-alpha to GTP. This Drosophila melanogaster (Fruit fly) protein is Probable elongation factor 1-beta.